A 772-amino-acid polypeptide reads, in one-letter code: Serine/threonine-protein kinase tousled-like 2 (772 aa).

Residues 24–126 (GVSKGPLNSE…SNPLPRRVEQ (103 aa)) form a disordered region. Residues 29–44 (PLNSESSNQSLCSVGS) show a composition bias toward polar residues. A compositionally biased stretch (basic and acidic residues) spans 46-61 (SDKEVETPEKKQNDQR). Phosphoserine is present on residues S73, S94, S99, S115, S117, and S134. Residues 180–208 (QNSPSSTGSGNTEHSCSSQKQISIQHRQT) form a disordered region. Residues 225–276 (NSDLEKKEGRIDDLLRANCDLRRQIDEQQKMLEKYKERLNRCVTMSKKLLIE) form a required for interaction with TLK1 and DYNLL1/LC8 region. Coiled coils occupy residues 225–276 (NSDL…LLIE) and 317–347 (AFQN…KRKP). The segment at 342-385 (LAKRKPPAMGQAPPATNEQKQRKSKTNGAENETPSSGNTELKDT) is disordered. Polar residues predominate over residues 367–380 (TNGAENETPSSGNT). The stretch at 403 to 451 (HEQEEIFKLRLGHLKKEEAEIQAELERLERVRNLHIRELKRIHNEDNSQ) forms a coiled coil. In terms of domain architecture, Protein kinase spans 462-741 (YLLLHLLGRG…VQQLACDPYL (280 aa)). Residues 468–476 (LGRGGFSEV) and K491 contribute to the ATP site. The active-site Proton acceptor is D592. The residue at position 750 (S750) is a Phosphoserine; by CHEK1.

This sequence belongs to the protein kinase superfamily. Ser/Thr protein kinase family. Monomer. May form homodimers; homodimerization may enhance autophosphoylation and enzymatic activity. Heterodimer with TLK1. Interacts with YWHAZ; association with 14-3-3 proteins such as YWHAZ regulates subcellular location. May also interact with FEZ1/LZTS1 and FEZ2. Interacts with CHD7 and CHD8. Interacts with DYNLL1/LC8. It depends on Mg(2+) as a cofactor. Phosphorylated at Ser-750, probably by CHEK1. Post-translationally, autophosphorylated; phosphorylation promotes the assembly of higher order oligomers and enzymatic activity. As to expression, detected in placenta, fetal liver, kidney, pancreas, heart and skeletal muscle. Highly expressed in testis. Detected in spleen, thymus, colon, ovary, small intestine, prostate and peripheral blood leukocytes. Almost undetectable in liver and lung.

The protein localises to the nucleus. The protein resides in the nucleoplasm. It localises to the cytoplasm. Its subcellular location is the perinuclear region. It is found in the cytoskeleton. The catalysed reaction is L-seryl-[protein] + ATP = O-phospho-L-seryl-[protein] + ADP + H(+). The enzyme catalyses L-threonyl-[protein] + ATP = O-phospho-L-threonyl-[protein] + ADP + H(+). Cell cycle-regulated, with maximal activity in the S-phase. Rapidly and transiently inhibited by phosphorylation following the generation of DNA double-stranded breaks during S-phase, probably by CHEK1, possibly at Ser-750. This inhibition is cell cycle checkpoint- and ATM-dependent. Serine/threonine-protein kinase involved in the process of chromatin assembly and probably also DNA replication, transcription, repair, and chromosome segregation. Phosphorylates the chromatin assembly factors ASF1A and ASF1B. Phosphorylation of ASF1A prevents its proteasome-mediated degradation, thereby enhancing chromatin assembly. Negative regulator of amino acid starvation-induced autophagy. The chain is Serine/threonine-protein kinase tousled-like 2 from Homo sapiens (Human).